A 917-amino-acid chain; its full sequence is MEANQEASLFLVKILEELDSKQNTVSYQDLCKSLCAQFDLSQLAKLRSVLFYTACLDPNFPATLFKDKMKCSVNNQQSKKIMVAADIVTIFNLIQMNGGTAKEKLPTSCHKVRKEEASFESCRSDAEVCSPTVCEPLNCELSERPFSRGYPTRQSSKCRKMDCKECPQFVPASEPNFLLGVSKEVKNRAASLDRLQALSPYSVASPQPCEMQRTYFPMNIENESISDQDSLPIGQGIKETFISSEEPFMVQSCVQKRNIFKEDFHNLMTVSPSLVGTTNKAEEDHGEPRSQKELHKPPFFNHSFEMPYHSQYLNPVYSPIPDKRRAKHESLDDLQASTYFGPTPVMGTQDTRRCPGRPSKQTPWPAKSWSLNTEEVPDFERSFFNRNPSEEKLRYPNSGNQTPNFSGPDRHPVYLVPKDQQKVLPAGYAVKPNGLKSKEIPSPVDLEKHEAVKKFKDKSISCTSGQHSSDTSSVGTQTEQHVLDPPKCKDLCSAGQAKYSDRHAMKHSDDDSEIVSDDISDIFRFLDDMSISGSTGVIQSSCYNSTGSLSQLHKSDCDSSPEHNLAKITNGVSGSKGDKCNRPENVHHSEEELKSSVCKLVLRIGEIERKLESLAGVREEISQVLGKLNKLDQKIQQPEKVNVQIDLNSLTSEAPSDDSASPRVFHAHSGSHGPKLENSPDWCCSDVSGSNSESLRVKALKKSLFTRPSSRSLTEENSATESKIASISNSPRDWRTITYTNRMSLNEEEIKDAGPANNKDWHRKSKEADRQYDIPPQHRLPKQPKDGFLVEQVFSPHPYPSSLKAHMKSNPLYTDMRLTELAEVKRGQPSWNIEEYARNTGDKGKLTALDLQTQESLNPNNLEYWMEDIYTPGYDSLLKRKEAEFRRAKVCKIAALITAAACTVILVIVVPICTMKS.

Residues 1 to 892 are Cytoplasmic-facing; sequence MEANQEASLF…AEFRRAKVCK (892 aa). Disordered regions lie at residues 337–367, 389–410, 457–476, 568–588, 652–679, 706–727, and 746–783; these read STYF…WPAK, SEEK…GPDR, DKSI…SVGT, ITNG…NVHH, SEAP…LENS, TRPS…IASI, and NEEE…LPKQ. Positions 460-476 are enriched in polar residues; that stretch reads ISCTSGQHSSDTSSVGT. Residues 576–588 are compositionally biased toward basic and acidic residues; it reads KGDKCNRPENVHH. The residue at position 712 (Ser-712) is a Phosphoserine. The chain crosses the membrane as a helical span at residues 893–913; sequence IAALITAAACTVILVIVVPIC. Residues 914–917 lie on the Extracellular side of the membrane; it reads TMKS.

The protein belongs to the MINAR family. In terms of assembly, interacts with NOTCH2; this interaction increases MINAR1 stability. Interacts (via N-terminus) with DEPTOR (via PDZ domain); this interaction may stabilize DEPTOR protein by impairing its ubiquitination.

It localises to the cell membrane. Intrinsically disordered protein which may negatively regulate mTOR signaling pathway by stabilizing the mTOR complex component DEPTOR. Negatively regulates angiogenesis. Negatively regulates cell growth. Negatively regulates neurite outgrowth in hippocampal neurons. In Rattus norvegicus (Rat), this protein is Major intrinsically disordered Notch2-binding receptor 1 (Minar1).